A 268-amino-acid polypeptide reads, in one-letter code: Undecaprenyl-diphosphatase (268 aa).

7 helical membrane-spanning segments follow: residues 7–27 (IFNAIILGIVEGITEFFPISS), 87–107 (LIYHHIILGNIPIIFIGLCIY), 116–136 (FYSIIYALIFGTILLILTEIS), 146–166 (IETPQILIIGIFQCLALWPGF), 187–207 (VEFSFILSVPIFFGASVLDVI), 210–230 (FYDISINNIPMLFSGFLSAFI), and 247–267 (SLIPFIIYRSILSIIIYLFFM).

This sequence belongs to the UppP family.

It localises to the cell membrane. It carries out the reaction di-trans,octa-cis-undecaprenyl diphosphate + H2O = di-trans,octa-cis-undecaprenyl phosphate + phosphate + H(+). Its function is as follows. Catalyzes the dephosphorylation of undecaprenyl diphosphate (UPP). Confers resistance to bacitracin. This is Undecaprenyl-diphosphatase from Buchnera aphidicola subsp. Baizongia pistaciae (strain Bp).